Reading from the N-terminus, the 556-residue chain is Potassium-transporting ATPase potassium-binding subunit (556 aa).

A run of 12 helical transmembrane segments spans residues 3–23 (AHGV…TPIL), 57–77 (AAYA…LYAL), 129–149 (GLTV…VALM), 172–192 (LGLL…QGVP), 247–267 (LVNL…TNTF), 278–298 (WALL…AWWA), 319–339 (LGVA…CGAV), 346–366 (LLPL…VVVG), 371–391 (GLYG…LMVG), 408–428 (LAVI…GLAI), 486–506 (FVVM…MAVP), and 516–536 (GWLF…LTYF).

The protein belongs to the KdpA family. The system is composed of three essential subunits: KdpA, KdpB and KdpC.

It is found in the cell inner membrane. Part of the high-affinity ATP-driven potassium transport (or Kdp) system, which catalyzes the hydrolysis of ATP coupled with the electrogenic transport of potassium into the cytoplasm. This subunit binds the periplasmic potassium ions and delivers the ions to the membrane domain of KdpB through an intramembrane tunnel. This chain is Potassium-transporting ATPase potassium-binding subunit, found in Paramagnetospirillum magneticum (strain ATCC 700264 / AMB-1) (Magnetospirillum magneticum).